A 279-amino-acid chain; its full sequence is Type III pantothenate kinase (279 aa).

6–13 (DIGNTLSK) provides a ligand contact to ATP. Residues Tyr-92 and 99–102 (GVDR) contribute to the substrate site. The active-site Proton acceptor is Asp-101. Asp-120 is a binding site for K(+). Ser-123 is a binding site for ATP. Thr-177 contacts substrate.

This sequence belongs to the type III pantothenate kinase family. Homodimer. NH4(+) is required as a cofactor. The cofactor is K(+).

Its subcellular location is the cytoplasm. The catalysed reaction is (R)-pantothenate + ATP = (R)-4'-phosphopantothenate + ADP + H(+). Its pathway is cofactor biosynthesis; coenzyme A biosynthesis; CoA from (R)-pantothenate: step 1/5. Its function is as follows. Catalyzes the phosphorylation of pantothenate (Pan), the first step in CoA biosynthesis. The sequence is that of Type III pantothenate kinase from Chromohalobacter salexigens (strain ATCC BAA-138 / DSM 3043 / CIP 106854 / NCIMB 13768 / 1H11).